A 269-amino-acid chain; its full sequence is Surfeit locus protein 4 (269 aa).

A run of 5 helical transmembrane segments spans residues 65–85, 92–112, 179–199, 203–223, and 242–262; these read LASS…VLVL, YACF…SILW, FFSI…AIGF, LAAL…NAFW, and TMSV…GVSM. The Di-lysine motif signature appears at 266–269; the sequence is KKEW.

Belongs to the SURF4 family. Found in a complex composed at least of SURF4, TMED2 and TMED10. May interact with LMAN1. Interacts with ZFYVE27 and with KIF5A in a ZFYVE27-dependent manner. Interacts with STING1. Interacts with SAR1B. Interacts with TMEM41B.

Its subcellular location is the endoplasmic reticulum membrane. It localises to the endoplasmic reticulum-Golgi intermediate compartment membrane. The protein localises to the golgi apparatus membrane. Endoplasmic reticulum cargo receptor that mediates the export of lipoproteins by recruiting cargos into COPII vesicles to facilitate their secretion. Acts as a cargo receptor for lipoproteins bearing both APOB and APOA1, thereby regulating lipoprotein delivery and the maintenance of lipid homeostasis. Synergizes with the GTPase SAR1B to mediate transport of circulating lipoproteins. Promotes the secretion of PCSK9. Also mediates the efficient secretion of erythropoietin (EPO). May also play a role in the maintenance of the architecture of the endoplasmic reticulum-Golgi intermediate compartment and of the Golgi. This Mus musculus (Mouse) protein is Surfeit locus protein 4.